The sequence spans 101 residues: Urease subunit beta (101 aa).

The protein belongs to the urease beta subunit family. As to quaternary structure, heterotrimer of UreA (gamma), UreB (beta) and UreC (alpha) subunits. Three heterotrimers associate to form the active enzyme.

The protein localises to the cytoplasm. It catalyses the reaction urea + 2 H2O + H(+) = hydrogencarbonate + 2 NH4(+). It participates in nitrogen metabolism; urea degradation; CO(2) and NH(3) from urea (urease route): step 1/1. This is Urease subunit beta from Dechloromonas aromatica (strain RCB).